Reading from the N-terminus, the 407-residue chain is Arginine biosynthesis bifunctional protein ArgJ (407 aa).

Substrate contacts are provided by threonine 157, lysine 183, threonine 194, glutamate 280, asparagine 402, and threonine 407. The Nucleophile role is filled by threonine 194.

It belongs to the ArgJ family. In terms of assembly, heterotetramer of two alpha and two beta chains.

It is found in the cytoplasm. It catalyses the reaction N(2)-acetyl-L-ornithine + L-glutamate = N-acetyl-L-glutamate + L-ornithine. The catalysed reaction is L-glutamate + acetyl-CoA = N-acetyl-L-glutamate + CoA + H(+). The protein operates within amino-acid biosynthesis; L-arginine biosynthesis; L-ornithine and N-acetyl-L-glutamate from L-glutamate and N(2)-acetyl-L-ornithine (cyclic): step 1/1. It functions in the pathway amino-acid biosynthesis; L-arginine biosynthesis; N(2)-acetyl-L-ornithine from L-glutamate: step 1/4. In terms of biological role, catalyzes two activities which are involved in the cyclic version of arginine biosynthesis: the synthesis of N-acetylglutamate from glutamate and acetyl-CoA as the acetyl donor, and of ornithine by transacetylation between N(2)-acetylornithine and glutamate. The chain is Arginine biosynthesis bifunctional protein ArgJ from Oceanobacillus iheyensis (strain DSM 14371 / CIP 107618 / JCM 11309 / KCTC 3954 / HTE831).